Reading from the N-terminus, the 418-residue chain is Sterigmatocystin 8-O-methyltransferase (418 aa).

The propeptide occupies 1 to 41; it reads MTLPNKAALVGLAHTLSEQVKRYLVTADETKSPEDHKLCIE. Substrate is bound at residue 170–176; sequence MRSAAYF. The interval 206 to 225 is substrate binding; that stretch reads LFDYYSTVDEVRGRRFDLGM. S-adenosyl-L-methionine-binding positions include 254-255, Asp277, 297-298, and Arg313; these read GG and DI. Catalysis depends on His317, which acts as the Proton acceptor.

The protein belongs to the class I-like SAM-binding methyltransferase superfamily. Cation-independent O-methyltransferase family. COMT subfamily.

It catalyses the reaction sterigmatocystin + S-adenosyl-L-methionine = 8-O-methylsterigmatocystin + S-adenosyl-L-homocysteine + H(+). The catalysed reaction is dihydrosterigmatocystin + S-adenosyl-L-methionine = 8-O-methyldihydrosterigmatocystin + S-adenosyl-L-homocysteine + H(+). It participates in mycotoxin biosynthesis; aflatoxin biosynthesis. Its function is as follows. Involved in the conversion of sterigmatocystin to O-methylsterigmatocystin (OMST) and dihydrosterigmatocystin to dihydro-o-methylsterigmatocystin in the aflatoxin biosynthesis pathway. This is Sterigmatocystin 8-O-methyltransferase (omtA) from Aspergillus flavus (strain ATCC 200026 / FGSC A1120 / IAM 13836 / NRRL 3357 / JCM 12722 / SRRC 167).